The following is a 162-amino-acid chain: Phosphopantetheine adenylyltransferase (162 aa).

Residue Ser11 participates in substrate binding. ATP-binding positions include 11-12 and His19; that span reads SF. Substrate is bound by residues Lys43, Val76, and Arg90. Residues 91–93, Glu101, and 126–132 each bind ATP; these read GLR and LKFVSSS.

The protein belongs to the bacterial CoaD family. Homohexamer. The cofactor is Mg(2+).

It is found in the cytoplasm. It catalyses the reaction (R)-4'-phosphopantetheine + ATP + H(+) = 3'-dephospho-CoA + diphosphate. It participates in cofactor biosynthesis; coenzyme A biosynthesis; CoA from (R)-pantothenate: step 4/5. Reversibly transfers an adenylyl group from ATP to 4'-phosphopantetheine, yielding dephospho-CoA (dPCoA) and pyrophosphate. This chain is Phosphopantetheine adenylyltransferase, found in Streptococcus suis (strain 05ZYH33).